Consider the following 1034-residue polypeptide: Potassium-transporting ATPase alpha chain 1 (1034 aa).

The Cytoplasmic segment spans residues 2-97; sequence GKAENYELYQ…NALRPPRGTP (96 aa). Residues Tyr7 and Tyr10 each carry the phosphotyrosine modification. Residues 13-40 are disordered; the sequence is ELGPGPSGDMAAKMSKKKAGRGGGKRKE. The span at 26–39 shows a compositional bias: basic residues; that stretch reads MSKKKAGRGGGKRK. Ser27 carries the phosphoserine; by PKA and PKC modification. The helical transmembrane segment at 98–118 threads the bilayer; that stretch reads EYVKFARQLAGGLQCLMWVAA. Residues 119 to 141 lie on the Lumenal side of the membrane; sequence AICLIAFAIQASEGDLTTDDNLY. A helical transmembrane segment spans residues 142 to 162; that stretch reads LALALIAVVVVTGCFGYYQEF. Residues 163 to 298 lie on the Cytoplasmic side of the membrane; sequence KSTNIIASFK…NEKTPIAIEI (136 aa). The disordered stretch occupies residues 222–244; it reads KVDNSSLTGESEPQTRSPECTHE. Residues 225–239 show a composition bias toward polar residues; sequence NSSLTGESEPQTRSP. A helical transmembrane segment spans residues 299–318; the sequence is EHFVDIIAGLAILFGATFFI. Residues 319–330 are Lumenal-facing; sequence VAMCIGYTFLRA. A helical membrane pass occupies residues 331 to 348; it reads MVFFMAIVVAYVPEGLLA. The K(+) site is built by Val339, Ala340, Val342, and Glu344. The Cytoplasmic portion of the chain corresponds to 349 to 782; that stretch reads TVTVCLSLTA…EQGRLIFDNL (434 aa). Catalysis depends on Asp386, which acts as the 4-aspartylphosphate intermediate. 2 residues coordinate Mg(2+): Asp386 and Thr388. A phosphoserine mark is found at Ser462 and Ser600. Positions 727 and 731 each coordinate Mg(2+). A helical transmembrane segment spans residues 783-802; that stretch reads KKSIAYTLTKNIPELTPYLI. Residue Glu796 coordinates K(+). The Lumenal portion of the chain corresponds to 803-812; the sequence is YITVSVPLPL. A helical transmembrane segment spans residues 813-833; sequence GCITILFIELCTDIFPSVSLA. Glu821 contacts K(+). Residues 834–853 lie on the Cytoplasmic side of the membrane; that stretch reads YEKAESDIMHLRPRNPKRDR. Phosphoserine is present on Ser839. A helical transmembrane segment spans residues 854-876; the sequence is LVNEPLAAYSYFQIGAIQSFAGF. Over 877–928 the chain is Lumenal; it reads TDYFTAMAQEGWFPLLCVGLRPQWENHHLQDLQDSYGQEWTFGQRLYQQYTC. The helical transmembrane segment at 929-948 threads the bilayer; that stretch reads YTVFFISIEMCQIADVLIRK. Residues 949-962 lie on the Cytoplasmic side of the membrane; that stretch reads TRRLSAFQQGFFRN. Position 953 is a phosphoserine; by PKA (Ser953). Residues 963–981 form a helical membrane-spanning segment; that stretch reads RILVIAIVFQVCIGCFLCY. The Lumenal segment spans residues 982–996; the sequence is CPGMPNIFNFMPIRF. The chain crosses the membrane as a helical span at residues 997 to 1017; sequence QWWLVPMPFGLLIFVYDEIRK. At 1018-1034 the chain is on the cytoplasmic side; the sequence is LGVRCCPGSWWDQELYY.

This sequence belongs to the cation transport ATPase (P-type) (TC 3.A.3) family. Type IIC subfamily. In terms of assembly, the gastric H(+)/K(+) ATPase pump is composed of the catalytic alpha subunit ATP4A and the regulatory beta subunit ATP4B. Interacts (via the P-domain) with ATP4B (via N-terminus); this interaction stabilizes the lumenal-open E2 conformation state and prevents the reverse reaction of the transport cycle.

It localises to the apical cell membrane. The protein resides in the cell membrane. It carries out the reaction K(+)(out) + ATP + H2O + H(+)(in) = K(+)(in) + ADP + phosphate + 2 H(+)(out). Down-regulated by K(+)-competitive acid blockers (P-CABs) such as vonoprazan. Its function is as follows. The catalytic subunit of the gastric H(+)/K(+) ATPase pump which transports H(+) ions in exchange for K(+) ions across the apical membrane of parietal cells. Uses ATP as an energy source to pump H(+) ions to the gastric lumen while transporting K(+) ion from the lumen into the cell. Remarkably generates a million-fold proton gradient across the gastric parietal cell membrane, acidifying the gastric juice down to pH 1. Within a transport cycle, the transfer of a H(+) ion across the membrane is coupled to ATP hydrolysis and is associated with a transient phosphorylation that shifts the pump conformation from inward-facing (E1) to outward-facing state (E2). The release of the H(+) ion in the stomach lumen is followed by binding of K(+) ion converting the pump conformation back to the E1 state. In Sus scrofa (Pig), this protein is Potassium-transporting ATPase alpha chain 1 (ATP4A).